Here is a 385-residue protein sequence, read N- to C-terminus: D-alanyl-D-alanine-carboxypeptidase/endopeptidase AmpH (385 aa).

Residues 1 to 21 form the signal peptide; it reads MKRSLLFSAVLCAASLTSVHA.

The protein belongs to the beta-lactamase family.

Its subcellular location is the cell inner membrane. Its activity is regulated as follows. Inhibited by cefmetazole. In terms of biological role, hydrolyzes the cross-linked dimers tetrapentapeptide (D45) and tetratetrapeptide (D44). Removes the terminal D-alanine from muropeptides and disaccharide pentapeptide M5 with a C-terminal D-Ala-D-Ala dipeptide. Associated with recycling and remodeling of peptidoglycan (PG). The polypeptide is D-alanyl-D-alanine-carboxypeptidase/endopeptidase AmpH (ampH) (Escherichia coli O157:H7).